The chain runs to 299 residues: Phosphoribosylaminoimidazole-succinocarboxamide synthase (299 aa).

The protein belongs to the SAICAR synthetase family.

The enzyme catalyses 5-amino-1-(5-phospho-D-ribosyl)imidazole-4-carboxylate + L-aspartate + ATP = (2S)-2-[5-amino-1-(5-phospho-beta-D-ribosyl)imidazole-4-carboxamido]succinate + ADP + phosphate + 2 H(+). It participates in purine metabolism; IMP biosynthesis via de novo pathway; 5-amino-1-(5-phospho-D-ribosyl)imidazole-4-carboxamide from 5-amino-1-(5-phospho-D-ribosyl)imidazole-4-carboxylate: step 1/2. This chain is Phosphoribosylaminoimidazole-succinocarboxamide synthase, found in Maridesulfovibrio salexigens (strain ATCC 14822 / DSM 2638 / NCIMB 8403 / VKM B-1763) (Desulfovibrio salexigens).